The chain runs to 371 residues: uncharacterized protein (371 aa).

Helical transmembrane passes span 4–24 (LPML…FIYG), 60–82 (LIQL…ALYG), 87–109 (LWIV…MLSI), 130–150 (VFIN…FVAS), 197–217 (VVAV…LLPV), 224–244 (IYPL…YGLV), 282–302 (VPIW…GFHA), and 320–340 (FIFY…CMVG).

This sequence belongs to the peptide transporter carbon starvation (CstA) (TC 2.A.114) family.

It is found in the cell membrane. This is an uncharacterized protein from Haemophilus influenzae (strain ATCC 51907 / DSM 11121 / KW20 / Rd).